Reading from the N-terminus, the 167-residue chain is MAQEEEDVRDYNLTEEQKAIKAKYPPVNRKYEYLDHTADVQLHAWGDTLEEAFEQCAMAMFGYMTDTGTVEPLQTVEVETQGDDLQSLLFHFLDEWLYKFSADEFFIPREVKVLSIDQRNFKLRSIGWGEEFSLSKHPQGTEVKAITYSAMQVYNEENPEVFVIIDI.

Ala-2 carries the post-translational modification N-acetylalanine. Ca(2+)-binding residues include Asp-39, Asp-166, and Ile-167.

It belongs to the archease family. As to quaternary structure, component of the tRNA-splicing ligase complex.

Component of the tRNA-splicing ligase complex required to facilitate the enzymatic turnover of catalytic subunit RTCB. Together with DDX1, acts by facilitating the guanylylation of RTCB, a key intermediate step in tRNA ligation. This Homo sapiens (Human) protein is Protein archease (ZBTB8OS).